The following is a 138-amino-acid chain: Large ribosomal subunit protein uL16 (138 aa).

It belongs to the universal ribosomal protein uL16 family. Part of the 50S ribosomal subunit.

Its function is as follows. Binds 23S rRNA and is also seen to make contacts with the A and possibly P site tRNAs. The chain is Large ribosomal subunit protein uL16 from Chlamydia caviae (strain ATCC VR-813 / DSM 19441 / 03DC25 / GPIC) (Chlamydophila caviae).